A 156-amino-acid chain; its full sequence is Cyanate hydratase (156 aa).

Residues arginine 96, glutamate 99, and serine 122 contribute to the active site.

Belongs to the cyanase family.

The catalysed reaction is cyanate + hydrogencarbonate + 3 H(+) = NH4(+) + 2 CO2. Catalyzes the reaction of cyanate with bicarbonate to produce ammonia and carbon dioxide. The sequence is that of Cyanate hydratase from Burkholderia cenocepacia (strain ATCC BAA-245 / DSM 16553 / LMG 16656 / NCTC 13227 / J2315 / CF5610) (Burkholderia cepacia (strain J2315)).